The chain runs to 113 residues: Large ribosomal subunit protein bL17 (113 aa).

The protein belongs to the bacterial ribosomal protein bL17 family. As to quaternary structure, part of the 50S ribosomal subunit. Contacts protein L32.

The polypeptide is Large ribosomal subunit protein bL17 (Clostridium kluyveri (strain NBRC 12016)).